The following is a 92-amino-acid chain: N(2)-fixation sustaining protein CowN (92 aa).

The protein belongs to the CowN family.

Is required to sustain N(2)-dependent growth in the presence of low levels of carbon monoxide (CO). Probably acts by protecting the N(2) fixation ability of the nitrogenase complex, which is inactivated in the presence of CO. The protein is N(2)-fixation sustaining protein CowN of Cereibacter sphaeroides (strain KD131 / KCTC 12085) (Rhodobacter sphaeroides).